The following is a 243-amino-acid chain: LTAKLGYPITDELDIYTRLGGMVWRADSKYNIPGGASFKDHDTGVSPVFAGGLEWAVTRDIATRLEYQWTNNIGDANTVGTRPDNGLLSVGVSYRFGQQEAAAPVVAPAPAPAPEVQTKHFTLKSDVLFNFNKATLKPEGQQALDQMYTQLSNLDPKDGSVVVLGFTDRIGSDAYNQGLSEKRAQSVVDYLISKGIPSDKISARGMGESNPVTGNTCDNVKPRAALIDCLAPDRRVEIEVKGI.

5 beta stranded membrane passes run 1–8, 13–21, 47–56, 61–68, and 87–95; these read LTAKLGYP, LDIYTRLGG, PVFAGGLEWA, IATRLEYQ, and LLSVGVSYR. Repeat copies occupy residues 107 to 108, 109 to 110, 111 to 112, and 113 to 114. The segment at 107 to 114 is 4 X 2 AA tandem repeats of A-P; that stretch reads APAPAPAP. The OmpA-like domain occupies 116 to 243; that stretch reads VQTKHFTLKS…RRVEIEVKGI (128 aa). Cys217 and Cys229 are joined by a disulfide.

This sequence belongs to the outer membrane OOP (TC 1.B.6) superfamily. OmpA family. In terms of assembly, monomer and homodimer.

It localises to the cell outer membrane. Its function is as follows. With TolR probably plays a role in maintaining the position of the peptidoglycan cell wall in the periplasm. Acts as a porin with low permeability that allows slow penetration of small solutes; an internal gate slows down solute passage. This Atlantibacter hermannii (Escherichia hermannii) protein is Outer membrane protein A.